The chain runs to 437 residues: Ribulose bisphosphate carboxylase-like protein (437 aa).

K176 serves as the catalytic Proton acceptor. The Mg(2+) site is built by K202, D204, and E205. N6-carboxylysine is present on K202. Catalysis depends on H293, which acts as the Proton acceptor.

Belongs to the RuBisCO large chain family. Type IV subfamily. In terms of assembly, homodimer. Mg(2+) is required as a cofactor.

May be involved in sulfur metabolism and oxidative stress response. Does not show RuBisCO activity. The protein is Ribulose bisphosphate carboxylase-like protein of Archaeoglobus fulgidus (strain ATCC 49558 / DSM 4304 / JCM 9628 / NBRC 100126 / VC-16).